The following is a 228-amino-acid chain: Large ribosomal subunit protein uL1 (228 aa).

It belongs to the universal ribosomal protein uL1 family. In terms of assembly, part of the 50S ribosomal subunit.

In terms of biological role, binds directly to 23S rRNA. The L1 stalk is quite mobile in the ribosome, and is involved in E site tRNA release. Its function is as follows. Protein L1 is also a translational repressor protein, it controls the translation of the L11 operon by binding to its mRNA. The chain is Large ribosomal subunit protein uL1 from Clavibacter sepedonicus (Clavibacter michiganensis subsp. sepedonicus).